The chain runs to 279 residues: Putative colanic acid biosynthesis glycosyl transferase WcaA (279 aa).

The protein to R.meliloti ExoO.

It participates in slime biogenesis; slime polysaccharide biosynthesis. The protein is Putative colanic acid biosynthesis glycosyl transferase WcaA (wcaA) of Escherichia coli (strain K12).